The following is a 159-amino-acid chain: Dihydrofolate reductase (159 aa).

The region spanning 2–157 (TLSILVAHDL…IPHTFLHLIR (156 aa)) is the DHFR domain. 6–8 (LVA) is a substrate binding site. NADP(+)-binding positions include 7-8 (VA) and 15-20 (IGFENQ). Asp-28 lines the substrate pocket. 44–47 (GRKT) lines the NADP(+) pocket. Arg-58 contacts substrate. NADP(+)-binding positions include 63 to 66 (LTSD) and 93 to 98 (FGGQTL). Thr-112 provides a ligand contact to substrate.

The protein belongs to the dihydrofolate reductase family.

It catalyses the reaction (6S)-5,6,7,8-tetrahydrofolate + NADP(+) = 7,8-dihydrofolate + NADPH + H(+). The protein operates within cofactor biosynthesis; tetrahydrofolate biosynthesis; 5,6,7,8-tetrahydrofolate from 7,8-dihydrofolate: step 1/1. In terms of biological role, key enzyme in folate metabolism. Catalyzes an essential reaction for de novo glycine and purine synthesis, and for DNA precursor synthesis. The protein is Dihydrofolate reductase (folA) of Staphylococcus aureus (strain COL).